A 167-amino-acid polypeptide reads, in one-letter code: Phosphopantetheine adenylyltransferase (167 aa).

T9 is a binding site for substrate. ATP is bound by residues 9–10 (TF) and H17. Positions 41, 73, and 87 each coordinate substrate. Residues 88–90 (GLR), E98, and 123–129 (YQFISGT) each bind ATP.

This sequence belongs to the bacterial CoaD family. As to quaternary structure, homohexamer. Mg(2+) is required as a cofactor.

Its subcellular location is the cytoplasm. It catalyses the reaction (R)-4'-phosphopantetheine + ATP + H(+) = 3'-dephospho-CoA + diphosphate. The protein operates within cofactor biosynthesis; coenzyme A biosynthesis; CoA from (R)-pantothenate: step 4/5. Functionally, reversibly transfers an adenylyl group from ATP to 4'-phosphopantetheine, yielding dephospho-CoA (dPCoA) and pyrophosphate. In Bordetella avium (strain 197N), this protein is Phosphopantetheine adenylyltransferase.